Reading from the N-terminus, the 304-residue chain is Thyroxine 5-deiodinase (304 aa).

A disordered region spans residues 1–22; that stretch reads MPRQAASRLVVGEGEGPPGASG. Residues 1–42 lie on the Cytoplasmic side of the membrane; it reads MPRQAASRLVVGEGEGPPGASGPAATMLRSLLLHSLRLCAQT. Residues 43 to 62 traverse the membrane as a helical; Signal-anchor for type II membrane protein segment; it reads ASCLVLFPRFLGTAFMLWLL. The Extracellular portion of the chain corresponds to 63–304; that stretch reads DFLCIRKHFL…QLHGTRPRRL (242 aa). Selenocysteine 170 is an active-site residue. Position 170 (selenocysteine 170) is a non-standard amino acid, selenocysteine.

The protein belongs to the iodothyronine deiodinase family. Monomer. Homodimer. May undergo minor heretodimerization with DIO1 and DIO2. In terms of tissue distribution, neonatal skin, placenta, skeletal muscle and cerebral cortex.

Its subcellular location is the cell membrane. It is found in the endosome membrane. It catalyses the reaction 3,3',5'-triiodo-L-thyronine + iodide + A + H(+) = L-thyroxine + AH2. It carries out the reaction 3,3'-diiodo-L-thyronine + iodide + A + H(+) = 3,3',5-triiodo-L-thyronine + AH2. The catalysed reaction is 3-iodo-L-thyronine + iodide + A + H(+) = 3,5-diiodo-L-thyronine + AH2. The enzyme catalyses L-thyronine + iodide + A + H(+) = 3-iodo-L-thyronine + AH2. It catalyses the reaction 3',5'-diiodo-L-thyronine + iodide + A + H(+) = 3,3',5'-triiodo-L-thyronine + AH2. It carries out the reaction 3'-iodo-L-thyronine + iodide + A + H(+) = 3,3'-diiodo-L-thyronine + AH2. The catalysed reaction is 3,3',5'-triiodothyronamine + iodide + A + H(+) = 3,3',5,5'-tetraiodothyronamine + AH2. The enzyme catalyses 3',5'-diiodothyronamine + iodide + A + H(+) = 3,3',5'-triiodothyronamine + AH2. It catalyses the reaction 3,3'-diiodothyronamine + iodide + A + H(+) = 3,3',5-triiodothyronamine + AH2. It carries out the reaction 3-iodothyronamine + iodide + A + H(+) = 3,5-diiodothyronamine + AH2. The catalysed reaction is 3'-iodothyronamine + iodide + A + H(+) = 3,3'-diiodothyronamine + AH2. The enzyme catalyses thyronamine + iodide + A + H(+) = 3-iodothyronamine + AH2. Plays a crucial role in the metabolism of thyroid hormones (TH) and has specific roles in TH activation and inactivation by deiodination. Catalyzes the deiodination of L-thyroxine (T4) to 3,3',5'-triiodothyronine (rT3), 3,5-diiodothyronine (3,5-T2) to 3-monoiodothyronine (3-T1), rT3 to 3',5'-diiodothyronine (3',5'-T2) and 3,3'-diiodothyronine (3,3'-T2) to 3'-monoiodothyronine (3'-T1) via inner-ring deiodination (IRD). Catalyzes the deiodination of 3,5,3'-triiodothyronine (T3) to 3,3'-diiodothyronine (3,3'-T2) via IRD. Catalyzes the deiodination of 3-T1 to L-thyronine (T0) via outer-ring deiodination (ORD). Catalyzes the tyrosyl ring deiodinations of T4AM (3,3',5,5'-tetraiodothyronamine), rT3AM (3,3',5'-triiodothyronamine), T3AM (3,5,3'-triiodothyronamine), 3,5-T2AM (3,5-diiodothyronamine), 3,3'-T2AM (3,3'-diiodothyronamine) and 3-T1AM (3-iodothyronamine). This is Thyroxine 5-deiodinase (Dio3) from Rattus norvegicus (Rat).